The chain runs to 362 residues: 3-dehydroquinate synthase (362 aa).

NAD(+)-binding positions include 71–76 (DGERYK), 105–109 (GVIGD), 129–130 (TT), Lys-142, Lys-151, and 169–172 (CLKT). Zn(2+) is bound by residues Glu-184, His-247, and His-264.

It belongs to the sugar phosphate cyclases superfamily. Dehydroquinate synthase family. Requires Co(2+) as cofactor. It depends on Zn(2+) as a cofactor. The cofactor is NAD(+).

The protein resides in the cytoplasm. The enzyme catalyses 7-phospho-2-dehydro-3-deoxy-D-arabino-heptonate = 3-dehydroquinate + phosphate. It participates in metabolic intermediate biosynthesis; chorismate biosynthesis; chorismate from D-erythrose 4-phosphate and phosphoenolpyruvate: step 2/7. Catalyzes the conversion of 3-deoxy-D-arabino-heptulosonate 7-phosphate (DAHP) to dehydroquinate (DHQ). The sequence is that of 3-dehydroquinate synthase from Salmonella arizonae (strain ATCC BAA-731 / CDC346-86 / RSK2980).